Here is a 110-residue protein sequence, read N- to C-terminus: MHEMSITQNVVEICEKSAEGRRILAVVLEIGELSGVVPEAVEFCFEACTAGTLAEGARLAIDRVPGRGECGNCATVFPVRTYFDPCPACGAYGVRVVAGEELRVKELEVE.

Histidine 2 serves as a coordination point for Ni(2+). The Zn(2+) site is built by cysteine 70, cysteine 73, cysteine 86, and cysteine 89.

It belongs to the HypA/HybF family.

Involved in the maturation of [NiFe] hydrogenases. Required for nickel insertion into the metal center of the hydrogenase. This is Hydrogenase maturation factor HypA from Geobacter sulfurreducens (strain ATCC 51573 / DSM 12127 / PCA).